The chain runs to 430 residues: Histidine--tRNA ligase (430 aa).

This sequence belongs to the class-II aminoacyl-tRNA synthetase family. As to quaternary structure, homodimer.

Its subcellular location is the cytoplasm. The catalysed reaction is tRNA(His) + L-histidine + ATP = L-histidyl-tRNA(His) + AMP + diphosphate + H(+). This Acinetobacter baumannii (strain ACICU) protein is Histidine--tRNA ligase.